Reading from the N-terminus, the 227-residue chain is Translation initiation factor 6 (227 aa).

This sequence belongs to the eIF-6 family.

Functionally, binds to the 50S ribosomal subunit and prevents its association with the 30S ribosomal subunit to form the 70S initiation complex. The chain is Translation initiation factor 6 from Pyrococcus furiosus (strain ATCC 43587 / DSM 3638 / JCM 8422 / Vc1).